Reading from the N-terminus, the 625-residue chain is 1,4-alpha-glucan branching enzyme GlgB (625 aa).

The active-site Nucleophile is Asp302. The active-site Proton donor is the Glu355.

This sequence belongs to the glycosyl hydrolase 13 family. GlgB subfamily. In terms of assembly, monomer.

It carries out the reaction Transfers a segment of a (1-&gt;4)-alpha-D-glucan chain to a primary hydroxy group in a similar glucan chain.. It participates in glycan biosynthesis; glycogen biosynthesis. Catalyzes the formation of the alpha-1,6-glucosidic linkages in glycogen by scission of a 1,4-alpha-linked oligosaccharide from growing alpha-1,4-glucan chains and the subsequent attachment of the oligosaccharide to the alpha-1,6 position. In Albidiferax ferrireducens (strain ATCC BAA-621 / DSM 15236 / T118) (Rhodoferax ferrireducens), this protein is 1,4-alpha-glucan branching enzyme GlgB.